A 37-amino-acid polypeptide reads, in one-letter code: Cytochrome b6-f complex subunit 5 (37 aa).

The helical transmembrane segment at 5 to 25 threads the bilayer; it reads LLSGIVLGLVPVTITGLFVAA.

This sequence belongs to the PetG family. In terms of assembly, the 4 large subunits of the cytochrome b6-f complex are cytochrome b6, subunit IV (17 kDa polypeptide, PetD), cytochrome f and the Rieske protein, while the 4 small subunits are PetG, PetL, PetM and PetN. The complex functions as a dimer.

It localises to the plastid. It is found in the chloroplast thylakoid membrane. Its function is as follows. Component of the cytochrome b6-f complex, which mediates electron transfer between photosystem II (PSII) and photosystem I (PSI), cyclic electron flow around PSI, and state transitions. PetG is required for either the stability or assembly of the cytochrome b6-f complex. This chain is Cytochrome b6-f complex subunit 5, found in Emiliania huxleyi (Coccolithophore).